Consider the following 499-residue polypeptide: MAMSDKKDVVLIGAGVLSTTFGSMLKTIAPDWDIHLYERLDRPGIESSNERNNAGTGHAALCELNYTVQQPDGSIDIEKAKEINEQFEISKQFWGHLVKSGEIQNPKEFINPLPHISFVRGKNNVKFLKDRYEAMKQFPMFDNIEYTEDIEEMRKWIPLMMKGREDKGYMAASKIDEGTDVNYGELTRKMAQNLKNSPNVEVQYKHEVVDFERLSNGKWSVKIKNLNNGQVFEHQTDYVFIGAGGGAIPLLQKTGIPESKHLGGFPISGQFIACTNPQVIEQHDAKVYGKEPPGTPPMTVPHLDTRYIDGERTLLFGPFANVGPKFLKHGSNLDLFKSIKPYNITTLLASAVKNLPLIKYSFDQVIMTKEGCMNHLRTFYPEARDEDWQVYTAGKRVQVIKDTEENGKGFIQFGTEVVNSEDHSVIALLGESPGASTSVSVALEVLEKNFPEYAKDWEPKIKKMIPSYGESLIDDVQLMRKIRKQTSKDLELGFYNKAK.

Belongs to the MQO family. It depends on FAD as a cofactor.

It catalyses the reaction (S)-malate + a quinone = a quinol + oxaloacetate. It functions in the pathway carbohydrate metabolism; tricarboxylic acid cycle; oxaloacetate from (S)-malate (quinone route): step 1/1. This Staphylococcus epidermidis (strain ATCC 12228 / FDA PCI 1200) protein is Probable malate:quinone oxidoreductase 4.